The sequence spans 262 residues: MEKCDICHQKFSNKTNLNRHKVMHSGKKKFECQFCRRPFFRNDRMKEHMMTHIKKGNTFECPITACNSKFNSFTSLQFHVDSEHIIRGSSPAKCKSCIKWFNSSHRLLLHFHTAHLDHTKFFSFKPAPILPKSTTSILNPIKNPDDFDRIFDFFKTEIAPLFPLHSTVSQAPLPQCSRSVKSAKELSPTPSTEIETPEEEELDGPESWYCDYCKIRFDDKVMWYLHSGLHSDDIPFKCSLCGSLCDGKYDFAAHLVYANHNF.

C2H2-type zinc fingers lie at residues 2–24 (EKCD…KVMH), 30–52 (FECQ…MMTH), 59–84 (FECP…DSEH), and 92–115 (AKCK…HTAH). The disordered stretch occupies residues 179 to 204 (SVKSAKELSPTPSTEIETPEEEELDG). Positions 185 to 194 (ELSPTPSTEI) are enriched in low complexity. Over residues 195–204 (ETPEEEELDG) the composition is skewed to acidic residues. 2 consecutive C2H2-type zinc fingers follow at residues 208-230 (WYCD…SGLH) and 236-260 (FKCS…YANH).

This sequence belongs to the krueppel C2H2-type zinc-finger protein family.

The protein localises to the nucleus. Functionally, together with the zinc finger protein ztf-16, plays a role in gonadogenesis, specifically in somatic gonad precursor cell development. This is possibly by regulating tra-1 gene expression. Its function is as follows. Required for proper gonadal primordium assembly and somatic gonad precursor cell morphology. This Caenorhabditis elegans protein is Zinc finger protein ehn-3.